Reading from the N-terminus, the 453-residue chain is MENILGLMSKDDWIYTGLLLFSFGASCYVRKIGNNILASGALGFAMSLFIIGPKIVYSLGICSIAISIQLLANKKSTPLYVFLTTFTYLMFVRFAHYILPVNEVASHTNVIQLIITLRIIGITFEENDAWVHKSDENPTKRYLTELPTILEKFAYFYHFCGLFTGPYYTYQMLIDSQNPILKSWDPTLEVKSRFVRLLWSVPVFVITNHYFPLDILRSDAIWEVSFFTRLVYAALIFVVFKTRVYSAWAIAESICVILGIGIYPAASNPKIIMGPTDLNAFDKLKTRENIEMSSDAIVNLDIPKVEFSDGFRDGMKAWNRSVQTWLALYVHSRVKVMRVETTMLVSAVWHGTYAGYFMSFGVVAMCAILEDVIFKLVPVDTETGVRPKWFRILYTHTIRCRGFEMLATGFLLKNAYDVHHFWSSIYYWLPLLCIPFYIYSAKISKPKKAQKSE.

The next 7 helical transmembrane spans lie at 4 to 24 (ILGL…FSFG), 36 to 56 (ILAS…PKIV), 79 to 99 (LYVF…HYIL), 154 to 174 (AYFY…QMLI), 195 to 215 (VRLL…PLDI), 220 to 240 (AIWE…FVVF), and 244 to 264 (VYSA…GIYP). A glycan (N-linked (GlcNAc...) asparagine) is linked at N319. H350 is a catalytic residue. The next 2 helical transmembrane spans lie at 354 to 374 (AGYF…DVIF) and 421 to 441 (FWSS…IYSA).

Belongs to the membrane-bound acyltransferase family. As to expression, expressed ubiquitously throughout development from early embryo to larval and adult stages. In adults, strongly expressed in pharyngeal muscle, body wall muscle, vulval cells, distal tip cells, intestinal cells and spermatheca.

The protein localises to the membrane. It carries out the reaction 1-octadecanoyl-sn-glycero-3-phospho-(1D-myo-inositol) + (5Z,8Z,11Z,14Z,17Z)-eicosapentaenoyl-CoA = 1-octadecanoyl-2-(5Z,8Z,11Z,14Z,17Z-eicosapentaenoyl)-sn-glycero-3-phospho-(1D-myo-inositol) + CoA. The catalysed reaction is a 1-acyl-sn-glycero-3-phospho-(1D-myo-inositol) + (5Z,8Z,11Z,14Z,17Z)-eicosapentaenoyl-CoA = a 1-acyl-2-(5Z,8Z,11Z,14Z,17Z-eicosapentaenoyl)-sn-glycero-3-phospho-(1D-myo-inositol) + CoA. It catalyses the reaction a 1-acyl-sn-glycero-3-phospho-(1D-myo-inositol) + (5Z,8Z,11Z,14Z)-eicosatetraenoyl-CoA = a 1-acyl-2-(5Z,8Z,11Z,14Z-eicosatetraenoyl)-sn-glycero-3-phospho-(1D-myo-inositol) + CoA. Its pathway is lipid metabolism; phospholipid metabolism. In terms of biological role, acyltransferase which mediates the conversion of lysophosphatidylinositol (1-acyl-sn-glycero-3-phosphatidylinositol or LPI) into phosphatidylinositol (1,2-diacyl-sn-glycero-3-phosphoinositol or PI) (LPIAT activity). Prefers sn-2-LPI rather than sn-1-LPI as the acyl acceptor. Lysophospholipid acyltransferases (LPLATs) catalyze the reacylation step of the phospholipid remodeling pathway also known as the Lands cycle. Involved in the selective incorporation of arachidonoyl-CoA ((5Z,8Z,11Z,14Z)-eicosatetraenoyl-CoA) and (5Z,8Z,11Z,14Z,17Z)-eicosapentaenoyl-CoA (EPA-CoA) into PI. Besides its role in biomembranes, PI is a precursor of PI 3-phosphate (PIP3) and its fatty acid composition has an important role in PI3P signaling. This is Membrane-bound acylglycerophosphatidylinositol O-acyltransferase mboa-7 from Caenorhabditis elegans.